A 361-amino-acid chain; its full sequence is Inner kinetochore subunit CNN1 (361 aa).

A disordered region spans residues 1–22 (MSTPRKAAGNNENTEVSEIRTP). Ser-2 carries the phosphoserine; by CDK1 modification. Thr-14 carries the post-translational modification Phosphothreonine; by CDK1 and MPS1. Ser-17 carries the phosphoserine; by CDK1 and MPS1 modification. 2 positions are modified to phosphothreonine; by CDK1: Thr-21 and Thr-42. Ser-50 is subject to Phosphoserine; by CDK1 and MPS1. Position 52 is a phosphoserine; by CDK1 (Ser-52). A Phosphothreonine; by MPS1 modification is found at Thr-53. Ser-55 carries the phosphoserine; by CDK1 modification. Residues 60–84 (NKDPNEVRSFLQDLSQVLARKSQGN) are interacts with the NDC80 complex subunits SPC24 and SPC25 and with the KNL1 complex. Ser-74 is subject to Phosphoserine; by CDK1 and MPS1. Thr-86 and Thr-88 each carry phosphothreonine; by MPS1. Position 91 is a phosphothreonine; by CDK1 and MPS1 (Thr-91). Positions 103–132 (EESQPEENELLRSRSEKLTDNNIGNETQPD) are disordered. The segment covering 111 to 121 (ELLRSRSEKLT) has biased composition (basic and acidic residues). At Ser-115 the chain carries Phosphoserine; by CDK1. The segment covering 122-132 (DNNIGNETQPD) has biased composition (polar residues). A Phosphothreonine; by CDK1 and MPS1 modification is found at Thr-129. Thr-134 carries the phosphothreonine; by MPS1 modification. The residue at position 135 (Ser-135) is a Phosphoserine; by MPS1. A Phosphothreonine; by CDK1 and MPS1 modification is found at Thr-139. Phosphoserine; by MPS1 is present on Ser-153. Thr-174 is subject to Phosphothreonine; by MPS1. At Ser-177 the chain carries Phosphoserine; by CDK1. Position 191 is a phosphothreonine; by CDK1 (Thr-191). The residue at position 192 (Ser-192) is a Phosphoserine; by CDK1. Positions 193-255 (PSIGMDQVDE…SDENLDDIGN (63 aa)) are disordered. Residues 219 to 254 (PLSEDLPSDDKEETEEAENEDYSFENTSDENLDDIG) are compositionally biased toward acidic residues. Ser-268 is modified (phosphoserine; by CDK1). Position 269 is a phosphoserine; by MPS1 and IPL1 (Ser-269).

This sequence belongs to the CENP-T/CNN1 family. Component of the inner kinetochore constitutive centromere-associated network (CCAN) (also known as central kinetochore CTF19 complex in yeast), which is composed of at least AME1, CHL4, CNN1, CTF3, CTF19, IML3, MCM16, MCM21, MCM22, MHF1, MHF2, MIF2, NKP1, NKP2, OKP1 and WIP1. Interacts (via N-terminus) with the outer kinetochore NDC80 complex subunits SPC24 (via C-terminus) and SPC25 (via C-terminus); the interaction is direct and contributes to the correct spatiotemporal organization of the KMN network. Interacts with outer kinetochore MIS12 complex subunit NNF1. Interacts (via N-terminus) with the KNL1 complex. Phosphorylation of the C-terminus by MPS1 kinase regulates interaction with the outer kinetochore Ndc80 complex. Phosphorylation levels rise from S-phase and through metaphase, the protein is thendephosphorylated in anaphase.

It localises to the nucleus. Its subcellular location is the chromosome. The protein localises to the centromere. The protein resides in the kinetochore. Component of the kinetochore, a multiprotein complex that assembles on centromeric DNA and attaches chromosomes to spindle microtubules, mediating chromosome segregation and sister chromatid segregation during meiosis and mitosis. Component of the inner kinetochore constitutive centromere-associated network (CCAN), which serves as a structural platform for outer kinetochore assembly. Modulates outer kinetochore KMN network activity by regulating interactions within the network. The polypeptide is Inner kinetochore subunit CNN1 (CNN1) (Saccharomyces cerevisiae (strain ATCC 204508 / S288c) (Baker's yeast)).